The sequence spans 545 residues: Phenylalanine--tRNA ligase beta subunit (545 aa).

The region spanning Leu266 to Ala342 is the B5 domain. Residues Asp320, Asp326, Glu329, and Asp330 each contribute to the Mg(2+) site.

This sequence belongs to the phenylalanyl-tRNA synthetase beta subunit family. Type 2 subfamily. In terms of assembly, tetramer of two alpha and two beta subunits. Requires Mg(2+) as cofactor.

The protein localises to the cytoplasm. It carries out the reaction tRNA(Phe) + L-phenylalanine + ATP = L-phenylalanyl-tRNA(Phe) + AMP + diphosphate + H(+). The protein is Phenylalanine--tRNA ligase beta subunit of Methanospirillum hungatei JF-1 (strain ATCC 27890 / DSM 864 / NBRC 100397 / JF-1).